A 153-amino-acid chain; its full sequence is Superoxide dismutase [Cu-Zn] (153 aa).

Residues His-46, His-48, and His-63 each coordinate Cu cation. A disulfide bond links Cys-57 and Cys-146. 4 residues coordinate Zn(2+): His-63, His-71, His-80, and Asp-83. Position 120 (His-120) interacts with Cu cation.

Belongs to the Cu-Zn superoxide dismutase family. Homodimer. It depends on Cu cation as a cofactor. Requires Zn(2+) as cofactor.

The protein resides in the cytoplasm. The catalysed reaction is 2 superoxide + 2 H(+) = H2O2 + O2. Functionally, destroys radicals which are normally produced within the cells and which are toxic to biological systems. In Solidago canadensis var. scabra (Tall goldenrod), this protein is Superoxide dismutase [Cu-Zn] (SODCC).